The following is a 586-amino-acid chain: Switch-associated protein 70 (586 aa).

The 97-residue stretch at 210-306 (DVLKQGYMLK…WIQAIQTTVS (97 aa)) folds into the PH domain. Positions 316–538 (HKEARQKRKE…NNTRSWKDKV (223 aa)) form a coiled coil.

In terms of assembly, the SWAP complex consists of NPM1, NCL, PARP1 and SWAP70. Tyrosine-phosphorylated.

The protein localises to the cytoplasm. It localises to the cell membrane. It is found in the nucleus. The protein resides in the cell projection. Its subcellular location is the lamellipodium. In terms of biological role, phosphatidylinositol 3,4,5-trisphosphate-dependent guanine nucleotide exchange factor (GEF) which, independently of RAS, transduces signals from tyrosine kinase receptors to RAC. It also mediates signaling of membrane ruffling. Regulates the actin cytoskeleton as an effector or adapter protein in response to agonist stimulated phosphatidylinositol (3,4)-bisphosphate production and cell protrusion. The protein is Switch-associated protein 70 (SWAP70) of Gallus gallus (Chicken).